The following is a 246-amino-acid chain: Granzyme H (246 aa).

An N-terminal signal peptide occupies residues 1-18; it reads MQPFLLLLAFLLTPGAGT. The propeptide at 19-20 is activation peptide; it reads EE. Residues 21–244 enclose the Peptidase S1 domain; the sequence is IIGGHEAKPH…FLPWIKRTMK (224 aa). A mediates the preference for acidic residues at the P3' and P4' sites region spans residues 46-48; it reads RKR. The cysteines at positions 49 and 65 are disulfide-linked. The active-site Charge relay system is His-64. Asn-71 and Asn-104 each carry an N-linked (GlcNAc...) asparagine glycan. Asp-108 functions as the Charge relay system in the catalytic mechanism. Disulfide bonds link Cys-142-Cys-208 and Cys-172-Cys-187. The N-linked (GlcNAc...) asparagine glycan is linked to Asn-179. Ser-202 (charge relay system) is an active-site residue.

The protein belongs to the peptidase S1 family. Granzyme subfamily. As to expression, constitutively expressed in NK cells.

The protein resides in the cytolytic granule. With respect to regulation, inhibited by SERPINB1. Functionally, cytotoxic chymotrypsin-like serine protease with preference for bulky and aromatic residues at the P1 position and acidic residues at the P3' and P4' sites. Probably necessary for target cell lysis in cell-mediated immune responses. Participates in the antiviral response via direct cleavage of several proteins essential for viral replication. In Homo sapiens (Human), this protein is Granzyme H (GZMH).